We begin with the raw amino-acid sequence, 116 residues long: U16-barytoxin-Tl1c (116 aa).

Residues 1–20 form the signal peptide; the sequence is MKTIIVFLSLLVLATKFGDA. Positions 21-74 are excised as a propeptide; the sequence is NEGVNQEQMKEVIQNEFREDFLNEMAAMSLLQQLEAIESTLLEKEADRNSRQKR. 3 cysteine pairs are disulfide-bonded: C75/C90, C82/C95, and C89/C110.

The protein belongs to the neurotoxin 14 (magi-1) family. 06 (ICK-Trit) subfamily. In terms of tissue distribution, expressed by the venom gland.

The protein localises to the secreted. Functionally, ion channel inhibitor. This Trittame loki (Brush-footed trapdoor spider) protein is U16-barytoxin-Tl1c.